A 95-amino-acid polypeptide reads, in one-letter code: Putative ESAT-6-like protein X (95 aa).

Positions 72 to 95 (HGQKVQRASSSMADTDRSVSSAWS) are disordered.

This sequence belongs to the WXG100 family.

This chain is Putative ESAT-6-like protein X, found in Mycobacterium leprae (strain TN).